Consider the following 174-residue polypeptide: 2-oxo-4-hydroxy-4-carboxy-5-ureidoimidazoline decarboxylase (174 aa).

The active-site Proton donor is the histidine 67. Residues proline 68, 84–88 (SQEEQ), and 119–123 (FVICA) each bind substrate. A Microbody targeting signal motif is present at residues 172-174 (TKL).

It belongs to the OHCU decarboxylase family. As to quaternary structure, homodimer.

It localises to the peroxisome. It catalyses the reaction 5-hydroxy-2-oxo-4-ureido-2,5-dihydro-1H-imidazole-5-carboxylate + H(+) = (S)-allantoin + CO2. It functions in the pathway purine metabolism; urate degradation; (S)-allantoin from urate: step 3/3. Its function is as follows. Catalyzes the stereoselective decarboxylation of 2-oxo-4-hydroxy-4-carboxy-5-ureidoimidazoline (OHCU) to (S)-allantoin. The protein is 2-oxo-4-hydroxy-4-carboxy-5-ureidoimidazoline decarboxylase (urad) of Danio rerio (Zebrafish).